Reading from the N-terminus, the 491-residue chain is Ketol-acid reductoisomerase (NADP(+)) (491 aa).

Positions 17–208 constitute a KARI N-terminal Rossmann domain; that stretch reads LGKCRFMSRD…GGHRAGVLES (192 aa). NADP(+) is bound by residues 45 to 48, Arg68, Arg76, Ser78, and 108 to 110; these read CGAQ and DKQ. Residue His132 is part of the active site. Gly158 contacts NADP(+). KARI C-terminal knotted domains lie at 209-344 and 345-484; these read SFVA…NYPE and YEGK…MTDM. 4 residues coordinate Mg(2+): Asp217, Glu221, Glu389, and Glu393. Ser414 contacts substrate.

Belongs to the ketol-acid reductoisomerase family. Requires Mg(2+) as cofactor.

The enzyme catalyses (2R)-2,3-dihydroxy-3-methylbutanoate + NADP(+) = (2S)-2-acetolactate + NADPH + H(+). It catalyses the reaction (2R,3R)-2,3-dihydroxy-3-methylpentanoate + NADP(+) = (S)-2-ethyl-2-hydroxy-3-oxobutanoate + NADPH + H(+). Its pathway is amino-acid biosynthesis; L-isoleucine biosynthesis; L-isoleucine from 2-oxobutanoate: step 2/4. It participates in amino-acid biosynthesis; L-valine biosynthesis; L-valine from pyruvate: step 2/4. Involved in the biosynthesis of branched-chain amino acids (BCAA). Catalyzes an alkyl-migration followed by a ketol-acid reduction of (S)-2-acetolactate (S2AL) to yield (R)-2,3-dihydroxy-isovalerate. In the isomerase reaction, S2AL is rearranged via a Mg-dependent methyl migration to produce 3-hydroxy-3-methyl-2-ketobutyrate (HMKB). In the reductase reaction, this 2-ketoacid undergoes a metal-dependent reduction by NADPH to yield (R)-2,3-dihydroxy-isovalerate. The protein is Ketol-acid reductoisomerase (NADP(+)) of Proteus mirabilis (strain HI4320).